The primary structure comprises 373 residues: 3-dehydroquinate synthase (373 aa).

NAD(+)-binding positions include 67 to 72 (EGEQAK), 101 to 105 (GVVLD), 125 to 126 (TT), lysine 138, and lysine 147. 3 residues coordinate Zn(2+): glutamate 180, histidine 240, and histidine 256.

Belongs to the sugar phosphate cyclases superfamily. Dehydroquinate synthase family. The cofactor is NAD(+). Co(2+) serves as cofactor. Requires Zn(2+) as cofactor.

Its subcellular location is the cytoplasm. It catalyses the reaction 7-phospho-2-dehydro-3-deoxy-D-arabino-heptonate = 3-dehydroquinate + phosphate. Its pathway is metabolic intermediate biosynthesis; chorismate biosynthesis; chorismate from D-erythrose 4-phosphate and phosphoenolpyruvate: step 2/7. Its function is as follows. Catalyzes the conversion of 3-deoxy-D-arabino-heptulosonate 7-phosphate (DAHP) to dehydroquinate (DHQ). The sequence is that of 3-dehydroquinate synthase (aroB) from Chlamydia muridarum (strain MoPn / Nigg).